The primary structure comprises 162 residues: Peroxiredoxin-2D (162 aa).

Residues 4-162 (ITVGDVVPDG…SSAEDILKAL (159 aa)) enclose the Thioredoxin domain. Cys-51 (cysteine sulfenic acid (-SOH) intermediate) is an active-site residue.

Belongs to the peroxiredoxin family. Prx5 subfamily. In terms of assembly, monomer. Exclusively expressed in buds and flowers. Also detected in pollen.

The protein localises to the cytoplasm. The catalysed reaction is [glutaredoxin]-dithiol + a hydroperoxide = [glutaredoxin]-disulfide + an alcohol + H2O. Thiol-specific peroxidase that catalyzes the reduction of hydrogen peroxide and organic hydroperoxides to water and alcohols, respectively. Plays a role in cell protection against oxidative stress by detoxifying peroxides. May be involved in intracellular redox signaling. The polypeptide is Peroxiredoxin-2D (PRXIID) (Arabidopsis thaliana (Mouse-ear cress)).